Consider the following 63-residue polypeptide: Large ribosomal subunit protein uL29 (63 aa).

The protein belongs to the universal ribosomal protein uL29 family.

The sequence is that of Large ribosomal subunit protein uL29 from Alcanivorax borkumensis (strain ATCC 700651 / DSM 11573 / NCIMB 13689 / SK2).